A 401-amino-acid chain; its full sequence is 8-amino-7-oxononanoate synthase (401 aa).

Residue Arg-19 coordinates substrate. Pyridoxal 5'-phosphate is bound at residue 106 to 107; sequence GY. His-131 contributes to the substrate binding site. Residues Ser-176, His-204, and Thr-233 each coordinate pyridoxal 5'-phosphate. Residue Lys-236 is modified to N6-(pyridoxal phosphate)lysine. Residue Thr-350 coordinates substrate.

The protein belongs to the class-II pyridoxal-phosphate-dependent aminotransferase family. BioF subfamily. As to quaternary structure, homodimer. It depends on pyridoxal 5'-phosphate as a cofactor.

The enzyme catalyses 6-carboxyhexanoyl-[ACP] + L-alanine + H(+) = (8S)-8-amino-7-oxononanoate + holo-[ACP] + CO2. The protein operates within cofactor biosynthesis; biotin biosynthesis. Its function is as follows. Catalyzes the decarboxylative condensation of pimeloyl-[acyl-carrier protein] and L-alanine to produce 8-amino-7-oxononanoate (AON), [acyl-carrier protein], and carbon dioxide. The chain is 8-amino-7-oxononanoate synthase from Pseudomonas aeruginosa (strain LESB58).